A 157-amino-acid polypeptide reads, in one-letter code: 3-dehydroquinate dehydratase (157 aa).

The active-site Proton acceptor is tyrosine 24. Positions 75, 81, and 88 each coordinate substrate. The active-site Proton donor is histidine 101. Residues 102-103 (LS) and arginine 112 contribute to the substrate site.

Belongs to the type-II 3-dehydroquinase family. As to quaternary structure, homododecamer.

The enzyme catalyses 3-dehydroquinate = 3-dehydroshikimate + H2O. Its pathway is metabolic intermediate biosynthesis; chorismate biosynthesis; chorismate from D-erythrose 4-phosphate and phosphoenolpyruvate: step 3/7. In terms of biological role, catalyzes a trans-dehydration via an enolate intermediate. In Brucella melitensis biotype 1 (strain ATCC 23456 / CCUG 17765 / NCTC 10094 / 16M), this protein is 3-dehydroquinate dehydratase.